Consider the following 126-residue polypeptide: Aspartate 1-decarboxylase (126 aa).

Serine 25 serves as the catalytic Schiff-base intermediate with substrate; via pyruvic acid. At serine 25 the chain carries Pyruvic acid (Ser). Threonine 57 contributes to the substrate binding site. Residue tyrosine 58 is the Proton donor of the active site. Residue 73–75 (GGA) participates in substrate binding.

The protein belongs to the PanD family. Heterooctamer of four alpha and four beta subunits. Pyruvate is required as a cofactor. Is synthesized initially as an inactive proenzyme, which is activated by self-cleavage at a specific serine bond to produce a beta-subunit with a hydroxyl group at its C-terminus and an alpha-subunit with a pyruvoyl group at its N-terminus.

It localises to the cytoplasm. The enzyme catalyses L-aspartate + H(+) = beta-alanine + CO2. Its pathway is cofactor biosynthesis; (R)-pantothenate biosynthesis; beta-alanine from L-aspartate: step 1/1. Catalyzes the pyruvoyl-dependent decarboxylation of aspartate to produce beta-alanine. In Acinetobacter baumannii (strain AB307-0294), this protein is Aspartate 1-decarboxylase.